We begin with the raw amino-acid sequence, 241 residues long: tRNA (guanine-N(7)-)-methyltransferase (241 aa).

Residues glycine 61, glutamate 84, arginine 86, asparagine 117, alanine 118, and leucine 137 each contribute to the S-adenosyl-L-methionine site. Residue aspartate 140 is part of the active site. Positions 141-149 (PHFKKTKHK) are alphaC helix. The S-adenosyl-L-methionine site is built by threonine 215 and glutamate 217. Residues 215 to 223 (TEEGKKVQR) form an alpha6 helix region.

This sequence belongs to the class I-like SAM-binding methyltransferase superfamily. TrmB family. In terms of assembly, catalytic component of the METTL1-WDR4 complex, composed of mettl1 and wdr4.

The protein resides in the nucleus. The catalysed reaction is guanosine(46) in tRNA + S-adenosyl-L-methionine = N(7)-methylguanosine(46) in tRNA + S-adenosyl-L-homocysteine. The enzyme catalyses a guanosine in mRNA + S-adenosyl-L-methionine = an N(7)-methylguanosine in mRNA + S-adenosyl-L-homocysteine. It catalyses the reaction a guanosine in miRNA + S-adenosyl-L-methionine = an N(7)-methylguanosine in miRNA + S-adenosyl-L-homocysteine. Its pathway is tRNA modification; N(7)-methylguanine-tRNA biosynthesis. Its function is as follows. Catalytic component of METTL1-WDR4 methyltransferase complex that mediates the formation of N(7)-methylguanine in a subset of RNA species, such as tRNAs, mRNAs and microRNAs (miRNAs). Catalyzes the formation of N(7)-methylguanine at position 46 (m7G46) in a large subset of tRNAs that contain the 5'-RAGGU-3' motif within the variable loop. M7G46 interacts with C13-G22 in the D-loop to stabilize tRNA tertiary structure and protect tRNAs from decay. Also acts as a methyltransferase for a subset of internal N(7)-methylguanine in mRNAs. Internal N(7)-methylguanine methylation of mRNAs in response to stress promotes their relocalization to stress granules, thereby suppressing their translation. Also methylates a specific subset of miRNAs. This chain is tRNA (guanine-N(7)-)-methyltransferase (mettl1), found in Danio rerio (Zebrafish).